A 461-amino-acid polypeptide reads, in one-letter code: MGKEKIHINIVVIGHVDSGKSTSTGHLIYKCGGIDKRTIEKFEKEAAEMGKGSFKYAWVLDKLKAERERGITIDIALWKFETSKYYVTIIDAPGHRDFIKNMITGTSQADCAVLIVAAGVGEFEAGISKNGQTREHALLAFTLGVKQLIVGVNKMDSTEPPYSQARFEEIQKEVSTYIKKIGYNPAAVAFVPISGWHGDNMLEASDKMSWFKGWKIERKDGNASGTTLLEALDAILPPSRPTDKPLRLPLQDVYKIGGIGTVPVGRVETGVLKPGMVVTFAPPNLTTEVKSVEMHHESLPEAVPGDNVGFNIKNVSVKEIRRGYVAGDSKNDPPKAAASFNAQVIILNHPGQINQGYAPVLDCHTAHIACKFNELIEKIDRRSGKKLEDNPKFVKSGDAAIVKLIPQKPMVVEPFSNYPPLGRFAVRDMRQTVAVGVIKAVDTKEISGKTTKAAEKAQKKK.

The residue at position 2 (G2) is a N,N,N-trimethylglycine. The tr-type G domain maps to 5–242 (KIHINIVVIG…DAILPPSRPT (238 aa)). The interval 14 to 21 (GHVDSGKS) is G1. 14 to 21 (GHVDSGKS) serves as a coordination point for GTP. The segment at 70–74 (GITID) is G2. The segment at 91–94 (DAPG) is G3. Residues 153–156 (NKMD) and 194–196 (SGW) contribute to the GTP site. The tract at residues 153 to 156 (NKMD) is G4. The interval 194-196 (SGW) is G5. 5-glutamyl glycerylphosphorylethanolamine occurs at positions 301 and 374.

The protein belongs to the TRAFAC class translation factor GTPase superfamily. Classic translation factor GTPase family. EF-Tu/EF-1A subfamily.

It is found in the cytoplasm. It catalyses the reaction GTP + H2O = GDP + phosphate + H(+). Functionally, translation elongation factor that catalyzes the GTP-dependent binding of aminoacyl-tRNA (aa-tRNA) to the A-site of ribosomes during the elongation phase of protein synthesis. Base pairing between the mRNA codon and the aa-tRNA anticodon promotes GTP hydrolysis, releasing the aa-tRNA from EEF1A1 and allowing its accommodation into the ribosome. The growing protein chain is subsequently transferred from the P-site peptidyl tRNA to the A-site aa-tRNA, extending it by one amino acid through ribosome-catalyzed peptide bond formation. The sequence is that of Elongation factor 1-alpha (eef1a) from Oryzias latipes (Japanese rice fish).